The sequence spans 350 residues: Arginine N-succinyltransferase (350 aa).

Leu125 provides a ligand contact to succinyl-CoA. The Proton donor role is filled by His229.

The protein belongs to the arginine N-succinyltransferase family.

The catalysed reaction is succinyl-CoA + L-arginine = N(2)-succinyl-L-arginine + CoA + H(+). The protein operates within amino-acid degradation; L-arginine degradation via AST pathway; L-glutamate and succinate from L-arginine: step 1/5. Its function is as follows. Catalyzes the transfer of succinyl-CoA to arginine to produce N(2)-succinylarginine. This Yersinia pseudotuberculosis serotype IB (strain PB1/+) protein is Arginine N-succinyltransferase.